A 341-amino-acid chain; its full sequence is Biotin synthase (341 aa).

A Radical SAM core domain is found at 56 to 285 (ADIQRAALLS…KARVRLSAGR (230 aa)). 3 residues coordinate [4Fe-4S] cluster: cysteine 71, cysteine 75, and cysteine 78. Residues cysteine 116, cysteine 148, cysteine 208, and arginine 280 each contribute to the [2Fe-2S] cluster site.

This sequence belongs to the radical SAM superfamily. Biotin synthase family. Homodimer. [4Fe-4S] cluster serves as cofactor. The cofactor is [2Fe-2S] cluster.

It catalyses the reaction (4R,5S)-dethiobiotin + (sulfur carrier)-SH + 2 reduced [2Fe-2S]-[ferredoxin] + 2 S-adenosyl-L-methionine = (sulfur carrier)-H + biotin + 2 5'-deoxyadenosine + 2 L-methionine + 2 oxidized [2Fe-2S]-[ferredoxin]. The protein operates within cofactor biosynthesis; biotin biosynthesis; biotin from 7,8-diaminononanoate: step 2/2. Its function is as follows. Catalyzes the conversion of dethiobiotin (DTB) to biotin by the insertion of a sulfur atom into dethiobiotin via a radical-based mechanism. This chain is Biotin synthase, found in Methylorubrum populi (strain ATCC BAA-705 / NCIMB 13946 / BJ001) (Methylobacterium populi).